A 124-amino-acid polypeptide reads, in one-letter code: Small ribosomal subunit protein uS12 (124 aa).

Position 89 is a 3-methylthioaspartic acid (aspartate 89).

Belongs to the universal ribosomal protein uS12 family. In terms of assembly, part of the 30S ribosomal subunit. Contacts proteins S8 and S17. May interact with IF1 in the 30S initiation complex.

Functionally, with S4 and S5 plays an important role in translational accuracy. In terms of biological role, interacts with and stabilizes bases of the 16S rRNA that are involved in tRNA selection in the A site and with the mRNA backbone. Located at the interface of the 30S and 50S subunits, it traverses the body of the 30S subunit contacting proteins on the other side and probably holding the rRNA structure together. The combined cluster of proteins S8, S12 and S17 appears to hold together the shoulder and platform of the 30S subunit. This chain is Small ribosomal subunit protein uS12, found in Prochlorococcus marinus (strain SARG / CCMP1375 / SS120).